A 217-amino-acid polypeptide reads, in one-letter code: Probable transaldolase (217 aa).

Catalysis depends on Lys83, which acts as the Schiff-base intermediate with substrate.

It belongs to the transaldolase family. Type 3B subfamily.

The protein resides in the cytoplasm. It carries out the reaction D-sedoheptulose 7-phosphate + D-glyceraldehyde 3-phosphate = D-erythrose 4-phosphate + beta-D-fructose 6-phosphate. It participates in carbohydrate degradation; pentose phosphate pathway; D-glyceraldehyde 3-phosphate and beta-D-fructose 6-phosphate from D-ribose 5-phosphate and D-xylulose 5-phosphate (non-oxidative stage): step 2/3. Transaldolase is important for the balance of metabolites in the pentose-phosphate pathway. The polypeptide is Probable transaldolase (Brucella anthropi (strain ATCC 49188 / DSM 6882 / CCUG 24695 / JCM 21032 / LMG 3331 / NBRC 15819 / NCTC 12168 / Alc 37) (Ochrobactrum anthropi)).